Reading from the N-terminus, the 349-residue chain is Adenosine deaminase (349 aa).

The Zn(2+) site is built by H25 and H27. Substrate contacts are provided by H27, D29, and G182. H209 is a binding site for Zn(2+). The Proton donor role is filled by E212. Zn(2+) is bound at residue D289.

The protein belongs to the metallo-dependent hydrolases superfamily. Adenosine and AMP deaminases family. Adenosine deaminase subfamily. Requires Zn(2+) as cofactor.

The enzyme catalyses adenosine + H2O + H(+) = inosine + NH4(+). It carries out the reaction 2'-deoxyadenosine + H2O + H(+) = 2'-deoxyinosine + NH4(+). Its function is as follows. Catalyzes the hydrolytic deamination of adenosine and 2-deoxyadenosine. The sequence is that of Adenosine deaminase from Streptococcus mutans serotype c (strain ATCC 700610 / UA159).